Here is a 1182-residue protein sequence, read N- to C-terminus: Protein patched homolog 2 (1182 aa).

Residues 1-57 (MVRPLSLGELPPSYTPPARSSAPHILAGSLQAPLWLRAYFQGLLFSLGCRIQKHCGK) are Cytoplasmic-facing. Residues 58–78 (VLFLGLVAFGALALGLRVAVI) form a helical membrane-spanning segment. Topologically, residues 79 to 394 (ETDLEQLWVE…DILRAFSEVS (316 aa)) are extracellular. Asparagine 370 is a glycosylation site (N-linked (GlcNAc...) asparagine). One can recognise an SSD domain in the interval 394–552 (STTRVVGGYL…MLVFPAILSL (159 aa)). The helical transmembrane segment at 395-414 (TTRVVGGYLLMLAYACVTML) threads the bilayer. Over 415 to 428 (RWDCAQSQGAVGLA) the chain is Cytoplasmic. The helical transmembrane segment at 429–449 (GVLLVALAVASGLGLCALLGI) threads the bilayer. The Extracellular portion of the chain corresponds to 450 to 457 (TFNAATTQ). A helical membrane pass occupies residues 458 to 478 (VLPFLALGIGVDDIFLLAHAF). The Cytoplasmic segment spans residues 479-501 (TKAPPDTPLPERMGECLRSTGTS). A helical membrane pass occupies residues 502–522 (VALTSVNNMVAFFMAALVPIP). At 523–531 (ALRAFSLQA) the chain is on the extracellular side. Residues 532 to 552 (AIVVGCNFAAVMLVFPAILSL) form a helical membrane-spanning segment. The Cytoplasmic segment spans residues 553-686 (DLRRRHRQRL…APLLLQTRAK (134 aa)). A helical membrane pass occupies residues 687–707 (ALVLLFFGALLGLSLYGATLV). Residues 708–963 (QDGLALTDVV…WEQYLGLRRC (256 aa)) are Extracellular-facing. Asparagine 812 is a glycosylation site (N-linked (GlcNAc...) asparagine). The helical transmembrane segment at 964 to 984 (FLLAVCILLVCTFLVCALLLL) threads the bilayer. The Cytoplasmic portion of the chain corresponds to 985 to 991 (SPWTAGL). The helical transmembrane segment at 992 to 1012 (IVLVLAMMTVELFGIMGFLGI) threads the bilayer. Lysine 1013 is a topological domain (extracellular). Residues 1014–1034 (LSAIPVVILVASIGIGVEFTV) form a helical membrane-spanning segment. Topologically, residues 1035–1064 (HVALGFLTSHGSRNLRAASALEQTFAPVTD) are cytoplasmic. The helical transmembrane segment at 1065–1085 (GAVSTLLGLLMLAGSNFDFII) threads the bilayer. Residue arginine 1086 is a topological domain, extracellular. A helical transmembrane segment spans residues 1087 to 1107 (YFFVVLTVLTLLGLLHGLLLL). The Cytoplasmic portion of the chain corresponds to 1108–1182 (PVLLSILGPP…YVHPASEEPT (75 aa)).

This sequence belongs to the patched family. As to expression, expressed in epithelial cells of the developing hair, tooth and whisker.

The protein localises to the membrane. Plays a role in the control of cellular growth. May have a role in epidermal development. May act as a receptor for Sonic hedgehog (SHH). The chain is Protein patched homolog 2 (Ptch2) from Mus musculus (Mouse).